We begin with the raw amino-acid sequence, 300 residues long: Iron/alpha-ketoglutarate-dependent dioxygenase okaE (300 aa).

Residues His134, Asp136, and His210 each contribute to the Fe cation site.

The protein belongs to the PhyH family. In terms of assembly, homodimer. The cofactor is Fe cation.

It catalyses the reaction okaramine A + 2-oxoglutarate + AH2 + O2 = 12-deshydroxyl okaramine E + succinate + A + CO2 + H2O. The catalysed reaction is 12-deshydroxyl okaramine E + 2-oxoglutarate + O2 = okaramine E + succinate + CO2. The enzyme catalyses okaramine A + 2-oxoglutarate + O2 = okaramine E + succinate + CO2. Its pathway is alkaloid biosynthesis. It participates in secondary metabolite biosynthesis; terpenoid biosynthesis. Its function is as follows. Iron/alpha-ketoglutarate-dependent dioxygenase; part of the gene cluster that mediates the biosynthesis of okaramine B, a prenylated indole alkaloid that possesses an unusual octacyclic ring system, including a four-membered azetidine ring and an eight-membered azocine ring, and that exhibits insecticidal activity against silkworm larvae. Within the pathway, okaE forms the unusual 2-dimethyl-3-methyl-azetidine ring to yield 12-deshydroxyl okaramine E from okaramine A. OkaE also catalyzes the hydroxylation of 12-deshydroxyl okaramine E to produce okaramine E. The biosynthesis begins with the NRPS okaA that condenses two tryptophan molecules into cyclo(L-Trp-L-Trp). Prenylation by the prenyltransferase okaC then leads to the formation of cyclo(N8-(alpha,alpha-dimethylallyl)-L-Trp-6a-(alpha,alpha-dime-thylallyl)-L-Trp). This is followed by indole 2,3-epoxidation by the FAD-dependent monooxygenase okaB to facilitate the formation of the hexahydropyrrolo[2,3-b]indole (HPI) moiety of okaramine C. The cytochrome P450 monooxygenase okaD then likely catalyzes formation of the eight-membered ring of okaramine A. The dioxygenase okaE further forms the unusual 2-dimethyl-3-methyl-azetidine ring to yield 12-deshydroxyl okaramine E, as well as the hydroxylation of 12-deshydroxyl okaramine E to produce okaramine E. The cytochrome P450 monoxygenase okaG converts 12-deshydroxyl okaramine E into 3-desmethyl okaramine B which is further methylated by the methyltransferase okaF into okaramine B. In a shunt pathway, okaG and okaF together are also able to convert okaramine E into okaramine D. Okaramine H is produced by nonenzymatic conversion from okaramine A. This is Iron/alpha-ketoglutarate-dependent dioxygenase okaE from Penicillium ochrochloron.